The sequence spans 192 residues: Cytidylate kinase (192 aa).

7-15 (GPAGSGKST) contributes to the ATP binding site.

The protein belongs to the cytidylate kinase family. Type 2 subfamily.

Its subcellular location is the cytoplasm. The catalysed reaction is CMP + ATP = CDP + ADP. It catalyses the reaction dCMP + ATP = dCDP + ADP. The chain is Cytidylate kinase from Haloarcula marismortui (strain ATCC 43049 / DSM 3752 / JCM 8966 / VKM B-1809) (Halobacterium marismortui).